We begin with the raw amino-acid sequence, 135 residues long: MVKIRLRRIGRKKLPIYQIVAADARARRDGRFLEVLGRYEPTRKPHQLTFNRERLMYWLSVGAQPTDTAKALIRRTGMLYENYMRIKGKSEEEIGTEMETWQQRNDSRLKRGLDRKAIRRKRKKEAEAKEKESAG.

The disordered stretch occupies residues 94-135 (IGTEMETWQQRNDSRLKRGLDRKAIRRKRKKEAEAKEKESAG). 2 stretches are compositionally biased toward basic and acidic residues: residues 105–116 (NDSRLKRGLDRK) and 124–135 (KEAEAKEKESAG).

The protein belongs to the bacterial ribosomal protein bS16 family.

This Chloroherpeton thalassium (strain ATCC 35110 / GB-78) protein is Small ribosomal subunit protein bS16.